Consider the following 173-residue polypeptide: Probable transcription termination protein NusA (173 aa).

Residues 31-97 (DEKIVFVVKE…EDVWVKKFGN (67 aa)) enclose the KH domain. Over residues 147–162 (ADNRPKKDEIPEKAAE) the composition is skewed to basic and acidic residues. A disordered region spans residues 147–173 (ADNRPKKDEIPEKAAESSENVQAEENQ). Residues 163-173 (SSENVQAEENQ) show a composition bias toward polar residues.

It belongs to the NusA family.

The protein resides in the cytoplasm. Its function is as follows. Participates in transcription termination. The polypeptide is Probable transcription termination protein NusA (Methanococcus vannielii (strain ATCC 35089 / DSM 1224 / JCM 13029 / OCM 148 / SB)).